We begin with the raw amino-acid sequence, 394 residues long: Phosphoglycerate kinase (394 aa).

Residues 21–23 (DFN), R37, 60–63 (HLGR), R119, and R152 contribute to the substrate site. ATP contacts are provided by residues K202, E324, and 350–353 (GGDS).

Belongs to the phosphoglycerate kinase family. In terms of assembly, monomer.

Its subcellular location is the cytoplasm. The enzyme catalyses (2R)-3-phosphoglycerate + ATP = (2R)-3-phospho-glyceroyl phosphate + ADP. Its pathway is carbohydrate degradation; glycolysis; pyruvate from D-glyceraldehyde 3-phosphate: step 2/5. The protein is Phosphoglycerate kinase of Carboxydothermus hydrogenoformans (strain ATCC BAA-161 / DSM 6008 / Z-2901).